Here is a 648-residue protein sequence, read N- to C-terminus: Threonine--tRNA ligase (648 aa).

The TGS domain maps to 1–62 (MVEIILPDGS…PHGAQVAIIT (62 aa)). The tract at residues 243-536 (DHRRIGKDLD…LVEHYAGWFP (294 aa)) is catalytic. The Zn(2+) site is built by C336, H387, and H513.

It belongs to the class-II aminoacyl-tRNA synthetase family. As to quaternary structure, homodimer. It depends on Zn(2+) as a cofactor.

The protein resides in the cytoplasm. It carries out the reaction tRNA(Thr) + L-threonine + ATP = L-threonyl-tRNA(Thr) + AMP + diphosphate + H(+). In terms of biological role, catalyzes the attachment of threonine to tRNA(Thr) in a two-step reaction: L-threonine is first activated by ATP to form Thr-AMP and then transferred to the acceptor end of tRNA(Thr). Also edits incorrectly charged L-seryl-tRNA(Thr). This is Threonine--tRNA ligase from Magnetococcus marinus (strain ATCC BAA-1437 / JCM 17883 / MC-1).